A 952-amino-acid chain; its full sequence is Glycine dehydrogenase (decarboxylating) (952 aa).

Lys696 carries the N6-(pyridoxal phosphate)lysine modification.

Belongs to the GcvP family. As to quaternary structure, the glycine cleavage system is composed of four proteins: P, T, L and H. The cofactor is pyridoxal 5'-phosphate.

The catalysed reaction is N(6)-[(R)-lipoyl]-L-lysyl-[glycine-cleavage complex H protein] + glycine + H(+) = N(6)-[(R)-S(8)-aminomethyldihydrolipoyl]-L-lysyl-[glycine-cleavage complex H protein] + CO2. Functionally, the glycine cleavage system catalyzes the degradation of glycine. The P protein binds the alpha-amino group of glycine through its pyridoxal phosphate cofactor; CO(2) is released and the remaining methylamine moiety is then transferred to the lipoamide cofactor of the H protein. The chain is Glycine dehydrogenase (decarboxylating) from Pelagibacter ubique (strain HTCC1062).